Here is a 429-residue protein sequence, read N- to C-terminus: Glucose-1-phosphate adenylyltransferase (429 aa).

Alpha-D-glucose 1-phosphate is bound by residues Gly162, 177–178 (EK), and Ser209.

Belongs to the bacterial/plant glucose-1-phosphate adenylyltransferase family. As to quaternary structure, homotetramer.

It carries out the reaction alpha-D-glucose 1-phosphate + ATP + H(+) = ADP-alpha-D-glucose + diphosphate. It participates in glycan biosynthesis; glycogen biosynthesis. Its function is as follows. Involved in the biosynthesis of ADP-glucose, a building block required for the elongation reactions to produce glycogen. Catalyzes the reaction between ATP and alpha-D-glucose 1-phosphate (G1P) to produce pyrophosphate and ADP-Glc. This chain is Glucose-1-phosphate adenylyltransferase, found in Cyanothece sp. (strain PCC 7425 / ATCC 29141).